Here is a 287-residue protein sequence, read N- to C-terminus: Large ribosomal subunit protein uL2 (287 aa).

The disordered stretch occupies residues 214–287 (LGRRPEVRGS…SKRGRGGRDA (74 aa)). Residues 271-287 (QRRRRKSSKRGRGGRDA) are compositionally biased toward basic residues.

The protein belongs to the universal ribosomal protein uL2 family. Part of the 50S ribosomal subunit. Forms a bridge to the 30S subunit in the 70S ribosome.

Functionally, one of the primary rRNA binding proteins. Required for association of the 30S and 50S subunits to form the 70S ribosome, for tRNA binding and peptide bond formation. It has been suggested to have peptidyltransferase activity; this is somewhat controversial. Makes several contacts with the 16S rRNA in the 70S ribosome. This chain is Large ribosomal subunit protein uL2, found in Synechococcus elongatus (strain ATCC 33912 / PCC 7942 / FACHB-805) (Anacystis nidulans R2).